Here is a 71-residue protein sequence, read N- to C-terminus: Beta-defensin 10 (71 aa).

The N-terminal stretch at 1–23 is a signal peptide; the sequence is MKTLCSLLLIGCLLFSYDTPVVG. Intrachain disulfides connect cysteine 37/cysteine 66, cysteine 44/cysteine 59, and cysteine 49/cysteine 67.

The protein belongs to the beta-defensin family.

The protein resides in the secreted. Has antibacterial activity. This Rattus norvegicus (Rat) protein is Beta-defensin 10 (Defb10).